The primary structure comprises 577 residues: Copine-8 (577 aa).

2 consecutive C2 domains span residues 19 to 146 (TSAT…RLEK) and 155 to 278 (KCGT…FNVY). 12 residues coordinate Ca(2+): Asp-52, Asp-58, Asp-112, Asp-114, Ser-117, Lys-122, Asp-124, Asp-186, Asp-192, Asp-248, Asp-250, and Asp-256. Ser-273 is subject to Phosphoserine. Residues 322 to 523 (NFTVAIDFTA…VQFVPFRDYI (202 aa)) form the VWFA domain.

The protein belongs to the copine family. It depends on Ca(2+) as a cofactor.

In terms of biological role, probable calcium-dependent phospholipid-binding protein that may play a role in calcium-mediated intracellular processes. This is Copine-8 from Mus musculus (Mouse).